Here is a 233-residue protein sequence, read N- to C-terminus: Large ribosomal subunit protein uL1 (233 aa).

Belongs to the universal ribosomal protein uL1 family. In terms of assembly, part of the 50S ribosomal subunit.

In terms of biological role, binds directly to 23S rRNA. The L1 stalk is quite mobile in the ribosome, and is involved in E site tRNA release. Functionally, protein L1 is also a translational repressor protein, it controls the translation of the L11 operon by binding to its mRNA. This is Large ribosomal subunit protein uL1 from Aeromonas hydrophila subsp. hydrophila (strain ATCC 7966 / DSM 30187 / BCRC 13018 / CCUG 14551 / JCM 1027 / KCTC 2358 / NCIMB 9240 / NCTC 8049).